The sequence spans 135 residues: Large ribosomal subunit protein bL19 (135 aa).

The protein belongs to the bacterial ribosomal protein bL19 family.

This protein is located at the 30S-50S ribosomal subunit interface and may play a role in the structure and function of the aminoacyl-tRNA binding site. This chain is Large ribosomal subunit protein bL19, found in Protochlamydia amoebophila (strain UWE25).